We begin with the raw amino-acid sequence, 85 residues long: uncharacterized protein (85 aa).

This is an uncharacterized protein from Acidithiobacillus ferrooxidans (Thiobacillus ferrooxidans).